The sequence spans 140 residues: Peptidyl-prolyl cis-trans isomerase FKBP2 (140 aa).

The N-terminal stretch at 1–20 (MRLSWVLTVLSICLSALVTA) is a signal peptide. Residues 47 to 135 (GDVLHMHYTG…VFEVELLKIE (89 aa)) enclose the PPIase FKBP-type domain.

It belongs to the FKBP-type PPIase family. FKBP2 subfamily. In terms of assembly, interacts with ARFGEF1/BIG1 and the C-terminal of EPB41L2.

It is found in the endoplasmic reticulum membrane. The catalysed reaction is [protein]-peptidylproline (omega=180) = [protein]-peptidylproline (omega=0). With respect to regulation, inhibited by both FK506 and rapamycin. PPIases accelerate the folding of proteins. It catalyzes the cis-trans isomerization of proline imidic peptide bonds in oligopeptides. The polypeptide is Peptidyl-prolyl cis-trans isomerase FKBP2 (FKBP2) (Bos taurus (Bovine)).